The sequence spans 442 residues: GTPase Der (442 aa).

EngA-type G domains are found at residues 2–167 (RTIA…PIQN) and 175–351 (FKFC…EQAM). Residues 8-15 (GKPNVGKS), 55-59 (DTGGI), 119-122 (NKIE), 181-188 (GRPNVGKS), 228-232 (DTAGI), and 293-296 (NKWD) each bind GTP. One can recognise a KH-like domain in the interval 352–436 (RKIATSLLND…PITLYWQDKN (85 aa)).

The protein belongs to the TRAFAC class TrmE-Era-EngA-EngB-Septin-like GTPase superfamily. EngA (Der) GTPase family. Associates with the 50S ribosomal subunit.

Its function is as follows. GTPase that plays an essential role in the late steps of ribosome biogenesis. The polypeptide is GTPase Der (Ureaplasma parvum serovar 3 (strain ATCC 27815 / 27 / NCTC 11736)).